The chain runs to 376 residues: UDP-4-amino-4,6-dideoxy-N-acetyl-beta-L-altrosamine transaminase (376 aa).

Residues Tyr4, 24–27, Ala54, and Ser176 contribute to the substrate site; that span reads EILT. N6-(pyridoxal phosphate)lysine is present on Lys181. Substrate is bound by residues Asn226 and 311–314; that span reads QVHY.

This sequence belongs to the DegT/DnrJ/EryC1 family.

It catalyses the reaction UDP-4-amino-4,6-dideoxy-N-acetyl-beta-L-altrosamine + 2-oxoglutarate = UDP-2-acetamido-2,6-dideoxy-beta-L-arabino-hex-4-ulose + L-glutamate. Functionally, catalyzes the second step in the biosynthesis of pseudaminic acid, a sialic-acid-like sugar that is used to modify flagellin. Uses UDP-2-acetamido-2,6-dideoxy-beta-L-arabino-4-hexulose as substrate producing UDP-4-amino-4,6-dideoxy-beta-L-AltNAc. In Campylobacter jejuni subsp. jejuni serotype O:23/36 (strain 81-176), this protein is UDP-4-amino-4,6-dideoxy-N-acetyl-beta-L-altrosamine transaminase (pseC).